A 407-amino-acid chain; its full sequence is Imidazolonepropionase (407 aa).

2 residues coordinate Fe(3+): His-68 and His-70. Positions 68 and 70 each coordinate Zn(2+). Residues Arg-77, Tyr-140, and His-173 each coordinate 4-imidazolone-5-propanoate. Tyr-140 contributes to the N-formimidoyl-L-glutamate binding site. His-238 is a Fe(3+) binding site. His-238 provides a ligand contact to Zn(2+). Gln-241 contributes to the 4-imidazolone-5-propanoate binding site. Asp-313 contributes to the Fe(3+) binding site. Asp-313 contributes to the Zn(2+) binding site. The N-formimidoyl-L-glutamate site is built by Asn-315 and Gly-317. Thr-318 lines the 4-imidazolone-5-propanoate pocket.

This sequence belongs to the metallo-dependent hydrolases superfamily. HutI family. Zn(2+) is required as a cofactor. The cofactor is Fe(3+).

It localises to the cytoplasm. It carries out the reaction 4-imidazolone-5-propanoate + H2O = N-formimidoyl-L-glutamate. It functions in the pathway amino-acid degradation; L-histidine degradation into L-glutamate; N-formimidoyl-L-glutamate from L-histidine: step 3/3. Catalyzes the hydrolytic cleavage of the carbon-nitrogen bond in imidazolone-5-propanoate to yield N-formimidoyl-L-glutamate. It is the third step in the universal histidine degradation pathway. This chain is Imidazolonepropionase, found in Burkholderia multivorans (strain ATCC 17616 / 249).